The sequence spans 314 residues: Ribose-phosphate pyrophosphokinase (314 aa).

ATP contacts are provided by residues 37–39 (DGE) and 96–97 (RQ). The Mg(2+) site is built by His131 and Asp170. The active site involves Lys194. D-ribose 5-phosphate is bound by residues Arg196, Asp220, and 224 to 228 (DTGGT).

This sequence belongs to the ribose-phosphate pyrophosphokinase family. Class I subfamily. As to quaternary structure, homohexamer. It depends on Mg(2+) as a cofactor.

It localises to the cytoplasm. The catalysed reaction is D-ribose 5-phosphate + ATP = 5-phospho-alpha-D-ribose 1-diphosphate + AMP + H(+). The protein operates within metabolic intermediate biosynthesis; 5-phospho-alpha-D-ribose 1-diphosphate biosynthesis; 5-phospho-alpha-D-ribose 1-diphosphate from D-ribose 5-phosphate (route I): step 1/1. In terms of biological role, involved in the biosynthesis of the central metabolite phospho-alpha-D-ribosyl-1-pyrophosphate (PRPP) via the transfer of pyrophosphoryl group from ATP to 1-hydroxyl of ribose-5-phosphate (Rib-5-P). The chain is Ribose-phosphate pyrophosphokinase from Vibrio cholerae serotype O1 (strain ATCC 39315 / El Tor Inaba N16961).